Reading from the N-terminus, the 349-residue chain is Signal peptidase I (349 aa).

Transmembrane regions (helical) follow at residues 3 to 23 (NLFF…LDYF) and 25 to 45 (LPNT…VLWC). Over 46-80 (YHRFVVLPKRHRQVARAEQRSGKTLSEEEKAKIEP) the chain is Cytoplasmic. Residues 81-101 (ISEASEFLSSLFPVLAVVFLV) traverse the membrane as a helical segment. At 102–349 (RSFLFEPFQI…RFERFFTAIK (248 aa)) the chain is on the periplasmic side. Active-site residues include Ser115 and Lys196.

The protein belongs to the peptidase S26 family.

The protein resides in the cell inner membrane. It carries out the reaction Cleavage of hydrophobic, N-terminal signal or leader sequences from secreted and periplasmic proteins.. This is Signal peptidase I (lepB) from Haemophilus influenzae (strain ATCC 51907 / DSM 11121 / KW20 / Rd).